The following is a 460-amino-acid chain: Beta-1,3-xylanase TXYA (460 aa).

The N-terminal stretch at 1–22 (MKKLAKMISVATLGACAFQAHA) is a signal peptide. The region spanning 23–337 (LDGKLVPDQG…LSDPKFIRHS (315 aa)) is the GH26 domain. The active-site Proton donor is the Glu138. The active-site Nucleophile is the Glu234. Residues 347 to 371 (GNSDGGNGGDNGGDNGGDNGGETPE) form a disordered region. Residues 348-366 (NSDGGNGGDNGGDNGGDNG) are compositionally biased toward gly residues. Residues 368–460 (ETPENCTDDF…TVTFTNQVCN (93 aa)) are carbohydrate binding module (CBM). Disulfide bonds link Cys373-Cys459 and Cys404-Cys409.

The protein belongs to the glycosyl hydrolase 26 family.

The catalysed reaction is Random hydrolysis of (1-&gt;3)-beta-D-glycosidic linkages in (1-&gt;3)-beta-D-xylans.. Its activity is regulated as follows. Completely inhibited by Cu(2+), Hg(2+) and N-bromosuccinimide. Strongly inhibited by Ag(+), Zn(2+) and Pb(2+). Moderately inhibited by Fe(3+), Al(3+), Mn(2+), dithiothreitol and p-chloromercuribenzoic acid. Slightly activated by Mg(2+) and Ca(2+). Unaffected by Na(+), K(+), Ba(2+), EDTA, iodoacetic acid and N-ethylmalaimide. Catalyzes the hydrolysis of beta-1,3-xylan into oligosaccharides, mainly xylotriose and xylobiose with smaller amounts of xylotetraose, xylose, xylopentaose and xylohexaose. Weakly active toward beta-1,3-xylotriose, yielding xylose and xylobiose. Converts beta-1,3-xylotetraose into xylotriose, xylobiose and xylose. Converts beta-1,3-xylopentaose into xylotetraose, xylotriose, xylobiose and xylose. Does not hydrolyze xylobiose, p-nitrophenyl-beta-xyloside, beta-1,4-xylan, curdlan or carboxymethylcellulose. The sequence is that of Beta-1,3-xylanase TXYA from Vibrio sp.